Reading from the N-terminus, the 190-residue chain is Crossover junction endodeoxyribonuclease RuvC (190 aa).

Residues D8, E67, and D139 contribute to the active site. Residues D8, E67, and D139 each coordinate Mg(2+).

This sequence belongs to the RuvC family. As to quaternary structure, homodimer which binds Holliday junction (HJ) DNA. The HJ becomes 2-fold symmetrical on binding to RuvC with unstacked arms; it has a different conformation from HJ DNA in complex with RuvA. In the full resolvosome a probable DNA-RuvA(4)-RuvB(12)-RuvC(2) complex forms which resolves the HJ. It depends on Mg(2+) as a cofactor.

It localises to the cytoplasm. The enzyme catalyses Endonucleolytic cleavage at a junction such as a reciprocal single-stranded crossover between two homologous DNA duplexes (Holliday junction).. Its function is as follows. The RuvA-RuvB-RuvC complex processes Holliday junction (HJ) DNA during genetic recombination and DNA repair. Endonuclease that resolves HJ intermediates. Cleaves cruciform DNA by making single-stranded nicks across the HJ at symmetrical positions within the homologous arms, yielding a 5'-phosphate and a 3'-hydroxyl group; requires a central core of homology in the junction. The consensus cleavage sequence is 5'-(A/T)TT(C/G)-3'. Cleavage occurs on the 3'-side of the TT dinucleotide at the point of strand exchange. HJ branch migration catalyzed by RuvA-RuvB allows RuvC to scan DNA until it finds its consensus sequence, where it cleaves and resolves the cruciform DNA. This Pasteurella multocida (strain Pm70) protein is Crossover junction endodeoxyribonuclease RuvC.